An 80-amino-acid polypeptide reads, in one-letter code: Serine palmitoyltransferase small subunit A (80 aa).

Topologically, residues 1–21 (MKVSCEDINGPRSSLSRAWNH) are cytoplasmic. The chain crosses the membrane as a helical span at residues 22 to 38 (MSWLYYQYLLVTALYML). Residues 39–43 (EPWER) lie on the Lumenal side of the membrane. The chain crosses the membrane as a helical span at residues 44–66 (TIFNSMLVSIVGMALYTGYIFMP). The Cytoplasmic portion of the chain corresponds to 67-80 (QHILAILHYFEIVQ).

The protein belongs to the SPTSS family. SPTSSA subfamily. Component of the serine palmitoyltransferase (SPT) complex, which is composed of SPTLC1, SPTLC2 or SPTLC3 and SPTSSA or SPTSSB. The heterodimer consisting of SPTLC1 and SPTLC2/SPTLC3 forms the catalytic core of the enzyme, while SPTSSA or SPTSSB subunits determine substrate specificity. SPT also interacts with ORMDL proteins, especially ORMDL3, which negatively regulate SPT activity in the presence of ceramides.

It localises to the endoplasmic reticulum membrane. It participates in lipid metabolism; sphingolipid metabolism. Functionally, component of the serine palmitoyltransferase multisubunit enzyme (SPT) that catalyzes the initial and rate-limiting step in sphingolipid biosynthesis by condensing L-serine and activated acyl-CoA (most commonly palmitoyl-CoA) to form long-chain bases. The SPT complex is composed of SPTLC1, SPTLC2 or SPTLC3 and SPTSSA or SPTSSB. Within this complex, the heterodimer consisting of SPTLC1 and SPTLC2/SPTLC3 forms the catalytic core. Within the SPT complex, SPTSSA stimulates the catalytic activity and plays a role in substrate specificity, which depends upon the overall complex composition. The SPTLC1-SPTLC2-SPTSSA complex shows a strong preference for C16-CoA substrate, while the SPTLC1-SPTLC3-SPTSSA isozyme uses both C14-CoA and C16-CoA as substrates, with a slight preference for C14-CoA. Independently of its action as a SPT component, may be involved in MBOAT7 localization to mitochondria-associated membranes, a membrane bridge between the endoplasmic reticulum and mitochondria, may hence affect MBOAT7-catalyzed incorporation of arachidonic acid into phosphatidylinositol. The protein is Serine palmitoyltransferase small subunit A (sptssa) of Xenopus tropicalis (Western clawed frog).